Here is a 269-residue protein sequence, read N- to C-terminus: uncharacterized protein (269 aa).

This sequence belongs to the methyltransferase superfamily.

This is an uncharacterized protein from Mycobacterium leprae (strain Br4923).